The sequence spans 2136 residues: U5 small nuclear ribonucleoprotein 200 kDa helicase (2136 aa).

Phosphoserine occurs at positions 17 and 26. The interval 39–81 is disordered; sequence EVLSLVGKLEGTRMGDKAQRTKPQMQEERRAKRRKRDEDRHDM. K46 participates in a covalent cross-link: Glycyl lysine isopeptide (Lys-Gly) (interchain with G-Cter in SUMO2). A compositionally biased stretch (basic and acidic residues) spans 48–81; sequence EGTRMGDKAQRTKPQMQEERRAKRRKRDEDRHDM. A coiled-coil region spans residues 54–84; the sequence is DKAQRTKPQMQEERRAKRRKRDEDRHDMNKM. S225 is subject to Phosphoserine. Position 389 is a phosphothreonine (T389). The interaction with C9orf78 and WBP4 stretch occupies residues 395 to 2129; it reads DLDQGGEALA…YKFSVDVKEA (1735 aa). Positions 490–673 constitute a Helicase ATP-binding 1 domain; the sequence is RAALETDENL…FLRVDPAKGL (184 aa). 503–510 is a binding site for ATP; sequence APTGAGKT. A DEAH box motif is present at residues 615–618; the sequence is DEIH. Positions 684–921 constitute a Helicase C-terminal 1 domain; sequence PLEQTYVGIT…NAKDAVNWLG (238 aa). Phosphotyrosine is present on Y709. A Glycyl lysine isopeptide (Lys-Gly) (interchain with G-Cter in SUMO) cross-link involves residue K944. K971 carries the N6-acetyllysine; alternate modification. A Glycyl lysine isopeptide (Lys-Gly) (interchain with G-Cter in SUMO); alternate cross-link involves residue K971. Residues 982-1286 enclose the SEC63 1 domain; the sequence is TELGRIASHY…SCETQLPVSF (305 aa). Residues K1071 and K1199 each participate in a glycyl lysine isopeptide (Lys-Gly) (interchain with G-Cter in SUMO) cross-link. Residues 1282-2136 form an interaction with TSSC4 region; that stretch reads LPVSFRHLIL…KEAETDSDSD (855 aa). The Helicase ATP-binding 2 domain maps to 1337–1512; that stretch reads NTVYNSDDNV…WLGCSATSTF (176 aa). Residue 1350–1357 participates in ATP binding; the sequence is APTGSGKT. The residue at position 1428 (T1428) is a Phosphothreonine. Positions 1454-1457 match the DEAH box motif; the sequence is DEVH. In terms of domain architecture, Helicase C-terminal 2 spans 1545–1753; that stretch reads PVYHAITKHS…TIENKQDAVD (209 aa). T1765 is subject to Phosphothreonine. The region spanning 1812–2124 is the SEC63 2 domain; it reads PLNLGMIAAY…GCDQEYKFSV (313 aa). At S2002 the chain carries Phosphoserine. Residue K2091 forms a Glycyl lysine isopeptide (Lys-Gly) (interchain with G-Cter in SUMO) linkage. At T2131 the chain carries Phosphothreonine. 2 positions are modified to phosphoserine: S2133 and S2135.

This sequence belongs to the helicase family. SKI2 subfamily. In terms of assembly, component of a core complex containing at least PRPF8, SNRNP200, EFTUD2 and SNRNP40. Component of the U5 snRNP and U4/U6-U5 tri-snRNP complexes, building blocks of the spliceosome. Component of the U4/U6-U5 tri-snRNP complex composed of the U4, U6 and U5 snRNAs and at least PRPF3, PRPF4, PRPF6, PRPF8, PRPF31, SNRNP200, TXNL4A, SNRNP40, DDX23, CD2BP2, PPIH, SNU13, EFTUD2, SART1 and USP39. Component of precatalytic, catalytic and postcatalytic spliceosomal complexes. Component of the minor spliceosome, which splices U12-type introns. Interacts with C9orf78; the interaction is direct and mutually exclusive with its interaction with WBP4. Interacts with WBP4; the interaction is mutually exclusive with its interaction with C9orf78. Interacts with PRPF8. Interacts with TSSC4; the interaction is direct, excludes recruitment of C9ORF78 and WBP4 to SNRNP200 and negatively regulates its RNA helicase activity.

The protein localises to the nucleus. It carries out the reaction ATP + H2O = ADP + phosphate + H(+). Catalyzes the ATP-dependent unwinding of U4/U6 RNA duplices, an essential step in the assembly of a catalytically active spliceosome. Plays a role in pre-mRNA splicing as core component of precatalytic, catalytic and postcatalytic spliceosomal complexes. As a component of the minor spliceosome, involved in the splicing of U12-type introns in pre-mRNAs. Involved in spliceosome assembly, activation and disassembly. Mediates changes in the dynamic network of RNA-RNA interactions in the spliceosome. This Mus musculus (Mouse) protein is U5 small nuclear ribonucleoprotein 200 kDa helicase (Snrnp200).